Reading from the N-terminus, the 665-residue chain is Zinc finger CCCH domain-containing protein 45 (665 aa).

Residues 1-55 (MDDGDLSFDFEGGLDQPPAGGGGGPAPHSSDPGGVGGGGGGGGPGDGGGHGRGRG) form a disordered region. The span at 33 to 50 (GGVGGGGGGGGPGDGGGH) shows a compositional bias: gly residues. C3H1-type zinc fingers lie at residues 58-85 (SYRQ…HQFD), 86-113 (KARM…HSYD), and 114-139 (DVKE…HVKL). The tract at residues 167–256 (HNNYNQQGER…QATRIATPLP (90 aa)) is disordered. Residues 169 to 200 (NYNQQGERPQHPQGSGLPNQNSIDNTTTTTAQ) show a composition bias toward polar residues. Over residues 205 to 238 (QQAQTTNQQPPQQQQQQQQQQQQQQKPNTNDQVQ) the composition is skewed to low complexity. The segment covering 239–250 (SVPNGSSNQATR) has biased composition (polar residues). The YTH domain occupies 260-395 (SRYFIVKSCN…FIGEQLASLL (136 aa)). Residues 432 to 459 (DIVLFDDNEEEEEEESEEEEEGNGQESQ) are a coiled coil. Residues 439–454 (NEEEEEEESEEEEEGN) are compositionally biased toward acidic residues. Disordered regions lie at residues 439 to 469 (NEEE…GMMW) and 561 to 665 (GPLM…SRKR). Residues 561–573 (GPLMGGLGMGGPG) are compositionally biased toward gly residues. A compositionally biased stretch (basic and acidic residues) spans 596–623 (TKREQRRPGGERGDRYETTSDQGSRGHD).

This chain is Zinc finger CCCH domain-containing protein 45, found in Oryza sativa subsp. japonica (Rice).